The following is a 379-amino-acid chain: Cytochrome b (379 aa).

The next 4 helical transmembrane spans lie at 32–52, 76–98, 111–131, and 177–197; these read YGSL…VLAT, WLLR…LHIG, VWNI…LGYV, and FFAL…LHIF. Residues His-82 and His-96 each coordinate heme b. His-181 and His-195 together coordinate heme b. Residue His-200 participates in a ubiquinone binding. 4 helical membrane-spanning segments follow: residues 223–243, 287–304, 320–340, and 348–367; these read YSVK…VFTL, LGGV…FLFS, LARL…WLGS, and NEVA…TMCA.

It belongs to the cytochrome b family. As to quaternary structure, the main subunits of complex b-c1 are: cytochrome b, cytochrome c1 and the Rieske protein. It depends on heme b as a cofactor.

The protein localises to the mitochondrion inner membrane. In terms of biological role, component of the ubiquinol-cytochrome c reductase complex (complex III or cytochrome b-c1 complex) that is part of the mitochondrial respiratory chain. The b-c1 complex mediates electron transfer from ubiquinol to cytochrome c. Contributes to the generation of a proton gradient across the mitochondrial membrane that is then used for ATP synthesis. In Brachionus plicatilis (Marine rotifer), this protein is Cytochrome b (mt:Cyt-b).